The chain runs to 365 residues: Ribosomal RNA large subunit methyltransferase M (365 aa).

S-adenosyl-L-methionine is bound by residues serine 193, 226-229, aspartate 245, aspartate 265, and aspartate 282; that span reads CPGG. Residue lysine 311 is the Proton acceptor of the active site.

Belongs to the class I-like SAM-binding methyltransferase superfamily. RNA methyltransferase RlmE family. RlmM subfamily. As to quaternary structure, monomer.

It localises to the cytoplasm. The enzyme catalyses cytidine(2498) in 23S rRNA + S-adenosyl-L-methionine = 2'-O-methylcytidine(2498) in 23S rRNA + S-adenosyl-L-homocysteine + H(+). Catalyzes the 2'-O-methylation at nucleotide C2498 in 23S rRNA. This chain is Ribosomal RNA large subunit methyltransferase M, found in Alteromonas mediterranea (strain DSM 17117 / CIP 110805 / LMG 28347 / Deep ecotype).